A 398-amino-acid polypeptide reads, in one-letter code: 1-deoxy-D-xylulose 5-phosphate reductoisomerase (398 aa).

Residues threonine 10, glycine 11, serine 12, isoleucine 13, lysine 37, asparagine 38, and asparagine 124 each coordinate NADPH. Residue lysine 125 coordinates 1-deoxy-D-xylulose 5-phosphate. Glutamate 126 is a binding site for NADPH. Aspartate 150 lines the Mn(2+) pocket. 4 residues coordinate 1-deoxy-D-xylulose 5-phosphate: serine 151, glutamate 152, serine 186, and histidine 209. Glutamate 152 lines the Mn(2+) pocket. Glycine 215 lines the NADPH pocket. 1-deoxy-D-xylulose 5-phosphate-binding residues include serine 222, asparagine 227, lysine 228, and glutamate 231. Glutamate 231 contributes to the Mn(2+) binding site.

This sequence belongs to the DXR family. Homodimer. Mg(2+) serves as cofactor. Mn(2+) is required as a cofactor.

It carries out the reaction 2-C-methyl-D-erythritol 4-phosphate + NADP(+) = 1-deoxy-D-xylulose 5-phosphate + NADPH + H(+). It participates in isoprenoid biosynthesis; isopentenyl diphosphate biosynthesis via DXP pathway; isopentenyl diphosphate from 1-deoxy-D-xylulose 5-phosphate: step 1/6. In terms of biological role, catalyzes the NADPH-dependent rearrangement and reduction of 1-deoxy-D-xylulose-5-phosphate (DXP) to 2-C-methyl-D-erythritol 4-phosphate (MEP). The sequence is that of 1-deoxy-D-xylulose 5-phosphate reductoisomerase from Buchnera aphidicola subsp. Acyrthosiphon pisum (strain 5A).